A 520-amino-acid polypeptide reads, in one-letter code: Glutamate--cysteine ligase (520 aa).

It belongs to the glutamate--cysteine ligase type 1 family. Type 1 subfamily.

The catalysed reaction is L-cysteine + L-glutamate + ATP = gamma-L-glutamyl-L-cysteine + ADP + phosphate + H(+). Its pathway is sulfur metabolism; glutathione biosynthesis; glutathione from L-cysteine and L-glutamate: step 1/2. The polypeptide is Glutamate--cysteine ligase (Sodalis glossinidius (strain morsitans)).